The sequence spans 187 residues: Hypoxanthine/guanine phosphoribosyltransferase (187 aa).

This sequence belongs to the purine/pyrimidine phosphoribosyltransferase family. Archaeal HPRT subfamily. Homodimer.

The protein localises to the cytoplasm. The catalysed reaction is IMP + diphosphate = hypoxanthine + 5-phospho-alpha-D-ribose 1-diphosphate. The enzyme catalyses GMP + diphosphate = guanine + 5-phospho-alpha-D-ribose 1-diphosphate. The protein operates within purine metabolism; IMP biosynthesis via salvage pathway; IMP from hypoxanthine: step 1/1. In terms of biological role, catalyzes a salvage reaction resulting in the formation of IMP that is energically less costly than de novo synthesis. The sequence is that of Hypoxanthine/guanine phosphoribosyltransferase from Ferroglobus placidus (strain DSM 10642 / AEDII12DO).